Reading from the N-terminus, the 109-residue chain is Flagellar hook-basal body complex protein FliE (109 aa).

It belongs to the FliE family.

It localises to the bacterial flagellum basal body. This Pseudomonas savastanoi pv. phaseolicola (strain 1448A / Race 6) (Pseudomonas syringae pv. phaseolicola (strain 1448A / Race 6)) protein is Flagellar hook-basal body complex protein FliE.